We begin with the raw amino-acid sequence, 294 residues long: uncharacterized protein (294 aa).

This sequence belongs to the glycosyltransferase 2 family.

This is an uncharacterized protein from Haemophilus influenzae (strain ATCC 51907 / DSM 11121 / KW20 / Rd).